The chain runs to 252 residues: Small ribosomal subunit protein uS2 (252 aa).

This sequence belongs to the universal ribosomal protein uS2 family.

This is Small ribosomal subunit protein uS2 from Ruminiclostridium cellulolyticum (strain ATCC 35319 / DSM 5812 / JCM 6584 / H10) (Clostridium cellulolyticum).